We begin with the raw amino-acid sequence, 228 residues long: Large ribosomal subunit protein uL1 (228 aa).

It belongs to the universal ribosomal protein uL1 family. Part of the 50S ribosomal subunit.

Functionally, binds directly to 23S rRNA. The L1 stalk is quite mobile in the ribosome, and is involved in E site tRNA release. Protein L1 is also a translational repressor protein, it controls the translation of the L11 operon by binding to its mRNA. This is Large ribosomal subunit protein uL1 from Clavibacter michiganensis subsp. michiganensis (strain NCPPB 382).